Reading from the N-terminus, the 687-residue chain is DNA-directed RNA polymerase subunit beta' (687 aa).

Positions 69, 71, 87, and 90 each coordinate Zn(2+). Residues aspartate 492, aspartate 494, and aspartate 496 each coordinate Mg(2+).

This sequence belongs to the RNA polymerase beta' chain family. RpoC1 subfamily. In plastids the minimal PEP RNA polymerase catalytic core is composed of four subunits: alpha, beta, beta', and beta''. When a (nuclear-encoded) sigma factor is associated with the core the holoenzyme is formed, which can initiate transcription. Mg(2+) serves as cofactor. The cofactor is Zn(2+).

Its subcellular location is the plastid. The protein localises to the chloroplast. It catalyses the reaction RNA(n) + a ribonucleoside 5'-triphosphate = RNA(n+1) + diphosphate. DNA-dependent RNA polymerase catalyzes the transcription of DNA into RNA using the four ribonucleoside triphosphates as substrates. This Silene latifolia (White campion) protein is DNA-directed RNA polymerase subunit beta'.